A 317-amino-acid chain; its full sequence is Carbonic anhydrase 6 (317 aa).

An N-terminal signal peptide occupies residues 1 to 17 (MRALVSVVSLFFLGIQA). One can recognise an Alpha-carbonic anhydrase domain in the interval 19–277 (SDWSYSGDDG…NNHRVVEANF (259 aa)). A disulfide bridge connects residues cysteine 41 and cysteine 223. The Proton donor/acceptor role is filled by histidine 84. Positions 110, 112, and 137 each coordinate Zn(2+). Substrate is bound at residue 219–220 (TT). Asparagine 255 is a glycosylation site (N-linked (GlcNAc...) asparagine).

Belongs to the alpha-carbonic anhydrase family. The cofactor is Zn(2+). As to expression, major constituent of saliva.

It is found in the secreted. It catalyses the reaction hydrogencarbonate + H(+) = CO2 + H2O. Reversible hydration of carbon dioxide. Its role in saliva is unknown. The polypeptide is Carbonic anhydrase 6 (Ca6) (Mus musculus (Mouse)).